The primary structure comprises 150 residues: UPF0178 protein PSEEN5341 (150 aa).

It belongs to the UPF0178 family.

In Pseudomonas entomophila (strain L48), this protein is UPF0178 protein PSEEN5341.